The following is a 72-amino-acid chain: Thiostrepton (72 aa).

Positions 1-55 are excised as a propeptide; it reads MDATAIHERWSVMSNASIGQEIGVEGLTGLDVDALEISDYVDETLLDGEDLTVTM. The segment at residues 56–67 is a cross-link (4-(1-hydroxyethyl)-7-isoleucino-2-(threonin-O3-ylcarbonyl)-7,8-dihydroquinolin-8-ol (Ile-Thr)); that stretch reads IASASCTTCICT. Ser-58 is subject to 2,3-didehydroalanine (Ser). The thiazole-4-carboxylic acid (Ser-Cys) cross-link spans 60-61; that stretch reads SC. The segment at residues 60-68 is a cross-link (5-amino-piperideine-2,5-dicarboxylic acid (Ser-Cys) (with S-69)); it reads SCTTCICTC. A cross-link (5-amino-piperideine-2,5-dicarboxylic acid (Ser-Ser) (with C-68)) is located at residues 60–69; sequence SCTTCICTCS. Thr-63 carries the post-translational modification (Z)-2,3-didehydrobutyrine. The (4S)-thiazoline-4-carboxylic acid (Thr-Cys) cross-link spans 63 to 64; sequence TC. Ile-65 bears the (3S,4R)-3,4-dihydroxyisoleucine mark. Positions 65–66 form a cross-link, thiazole-4-carboxylic acid (Ile-Cys); sequence IC. A cross-link (thiazole-4-carboxylic acid (Thr-Cys)) is located at residues 67 to 68; the sequence is TC. A cross-link (thiazole-4-carboxylic acid (Ser-Cys)) is located at residues 69–70; sequence SC. 2 positions are modified to 2,3-didehydroalanine (Ser): Ser-71 and Ser-72. Serine amide is present on Ser-72.

It belongs to the thiocillin family. Post-translationally, maturation of thiazole and oxazole containing antibiotics involves the enzymatic condensation of a Cys, Ser or Thr with the alpha-carbonyl of the preceding amino acid to form a thioether or ether bond, then dehydration to form a double bond with the alpha-amino nitrogen. Thiazoline or oxazoline ring are dehydrogenated to form thiazole or oxazole rings. Maturation of pyridinyl containing antibiotics involves the cross-linking of a Ser and a Cys-Ser pair usually separated by 7 or 8 residues along the peptide chain. The Ser residues are dehydrated to didehydroalanines, then bonded between their beta carbons. The alpha carbonyl of the Cys condenses with alpha carbon of the first Ser to form a pyridinyl ring. The ring may be multiply dehydrogenated to form a pyridine ring with loss of the amino nitrogen of the first Ser. In terms of processing, the amidation of Ser-72 probably does not occur by the same mechanism, oxidative cleavage of glycine, as in eukaryotes. Post-translationally, the structure of the 2,3-didehydrobutyrin is shown to be Z-isomer.

Its subcellular location is the secreted. In terms of biological role, has bacteriocidal activity. Inhibits bacterial protein biosynthesis by acting on the elongation factor Tu (EF-Tu). In Streptomyces azureus, this protein is Thiostrepton (tpdA).